Here is a 428-residue protein sequence, read N- to C-terminus: Putative aspergillopepsin A-like aspartic endopeptidase AFUA_2G15950 (428 aa).

The N-terminal stretch at 1-19 is a signal peptide; sequence MHSLQSFLFLLLLGYGVFA. Positions 20–90 are cleaved as a propeptide — activation peptide; that stretch reads APTSPQAQSQ…GTAANLVTDV (71 aa). Positions 110–425 constitute a Peptidase A1 domain; sequence FVSPVTIGGQ…DLRGPSIGLA (316 aa). Residue aspartate 126 is part of the active site. Residue asparagine 276 is glycosylated (N-linked (GlcNAc...) asparagine). The active site involves aspartate 312. N-linked (GlcNAc...) asparagine glycosylation occurs at asparagine 380.

It belongs to the peptidase A1 family.

The protein localises to the secreted. This chain is Putative aspergillopepsin A-like aspartic endopeptidase AFUA_2G15950, found in Aspergillus fumigatus (strain ATCC MYA-4609 / CBS 101355 / FGSC A1100 / Af293) (Neosartorya fumigata).